The primary structure comprises 121 residues: Large ribosomal subunit protein uL14 (121 aa).

The protein belongs to the universal ribosomal protein uL14 family. In terms of assembly, part of the 50S ribosomal subunit. Forms a cluster with proteins L3 and L19. In the 70S ribosome, L14 and L19 interact and together make contacts with the 16S rRNA in bridges B5 and B8.

Functionally, binds to 23S rRNA. Forms part of two intersubunit bridges in the 70S ribosome. This is Large ribosomal subunit protein uL14 from Parabacteroides distasonis (strain ATCC 8503 / DSM 20701 / CIP 104284 / JCM 5825 / NCTC 11152).